A 406-amino-acid chain; its full sequence is Acetylornithine aminotransferase (406 aa).

Pyridoxal 5'-phosphate is bound by residues 108–109 (GA) and Phe141. N(2)-acetyl-L-ornithine is bound at residue Arg144. 226–229 (DEVQ) is a binding site for pyridoxal 5'-phosphate. N6-(pyridoxal phosphate)lysine is present on Lys255. Thr283 lines the N(2)-acetyl-L-ornithine pocket. Thr284 is a pyridoxal 5'-phosphate binding site.

Belongs to the class-III pyridoxal-phosphate-dependent aminotransferase family. ArgD subfamily. As to quaternary structure, homodimer. Requires pyridoxal 5'-phosphate as cofactor.

It localises to the cytoplasm. The catalysed reaction is N(2)-acetyl-L-ornithine + 2-oxoglutarate = N-acetyl-L-glutamate 5-semialdehyde + L-glutamate. The protein operates within amino-acid biosynthesis; L-arginine biosynthesis; N(2)-acetyl-L-ornithine from L-glutamate: step 4/4. This is Acetylornithine aminotransferase from Pseudomonas putida (strain ATCC 47054 / DSM 6125 / CFBP 8728 / NCIMB 11950 / KT2440).